We begin with the raw amino-acid sequence, 39 residues long: Bacteriocin lactococcin-G subunit alpha (39 aa).

In terms of assembly, bacteriocin activity requires interaction of alpha and beta peptides in a molar ratio of 7:1 or 8:1 respectively.

In terms of biological role, kills Lactococci. The sequence is that of Bacteriocin lactococcin-G subunit alpha from Lactococcus lactis subsp. lactis (Streptococcus lactis).